Here is a 426-residue protein sequence, read N- to C-terminus: Interferon regulatory factor 8 (426 aa).

Residues 7 to 114 (GRRLRQWLIE…EPYKVYRIVP (108 aa)) constitute a DNA-binding region (IRF tryptophan pentad repeat).

The protein belongs to the IRF family. In terms of assembly, interacts (via C-terminus) with TRIM21 (via C-terminus). Interacts with the BATF-JUNB heterodimer. Interacts with BATF (via bZIP domain); the interaction is direct. Interacts with COPS2. Interacts with SPI1. In terms of processing, ubiquitinated. Ubiquitination by TRIM21 in macrophages, a process that is strongly increased upon interferon gamma stimulation, leds to the enhanced transcriptional activity of target cytokine genes. Ubiquitination leads to its degradation by the proteasome. Post-translationally, sumoylated with SUMO3. Desumoylated by SENP1. Predominantly expressed in lymphoid tissues.

It is found in the nucleus. The protein localises to the cytoplasm. Transcription factor that specifically binds to the upstream regulatory region of type I interferon (IFN) and IFN-inducible MHC class I genes (the interferon consensus sequence (ICS)). Can both act as a transcriptional activator or repressor. Plays a negative regulatory role in cells of the immune system. Involved in CD8(+) dendritic cell differentiation by forming a complex with the BATF-JUNB heterodimer in immune cells, leading to recognition of AICE sequence (5'-TGAnTCA/GAAA-3'), an immune-specific regulatory element, followed by cooperative binding of BATF and IRF8 and activation of genes. Required for the development of plasmacytoid dendritic cells (pDCs), which produce most of the type I IFN in response to viral infection. Positively regulates macroautophagy in dendritic cells. Acts as a transcriptional repressor of osteoclast differentiation factors such as NFATC1 and EEIG1. The sequence is that of Interferon regulatory factor 8 from Homo sapiens (Human).